We begin with the raw amino-acid sequence, 355 residues long: Heat-inducible transcription repressor HrcA (355 aa).

It belongs to the HrcA family.

Functionally, negative regulator of class I heat shock genes (grpE-dnaK-dnaJ and groELS operons). Prevents heat-shock induction of these operons. This is Heat-inducible transcription repressor HrcA from Prosthecochloris aestuarii (strain DSM 271 / SK 413).